We begin with the raw amino-acid sequence, 150 residues long: Head completion nuclease (150 aa).

Residues glutamate 29, aspartate 68, and lysine 84 contribute to the active site.

Belongs to the Caudovirales head completion nuclease family.

Functionally, during phage morphogenesis, plays an essential role in the head-tail joining step. The associated nuclease activity is essential for morphogenesis, possibly by cleaving packaged DNA to enable the joining of heads to tails. Displays both exo- and endonuclease activity. This is Head completion nuclease (50) from Enterobacteria phage T4 (Bacteriophage T4).